The primary structure comprises 194 residues: Large ribosomal subunit protein uL5 (194 aa).

The protein belongs to the universal ribosomal protein uL5 family. As to quaternary structure, part of the 50S ribosomal subunit; part of the 5S rRNA/L5/L18/L25 subcomplex. Contacts the 5S rRNA and the P site tRNA. Forms a bridge to the 30S subunit in the 70S ribosome.

Functionally, this is one of the proteins that bind and probably mediate the attachment of the 5S RNA into the large ribosomal subunit, where it forms part of the central protuberance. In the 70S ribosome it contacts protein S13 of the 30S subunit (bridge B1b), connecting the 2 subunits; this bridge is implicated in subunit movement. Contacts the P site tRNA; the 5S rRNA and some of its associated proteins might help stabilize positioning of ribosome-bound tRNAs. The chain is Large ribosomal subunit protein uL5 from Chlorobium luteolum (strain DSM 273 / BCRC 81028 / 2530) (Pelodictyon luteolum).